The sequence spans 52 residues: uncharacterized protein (52 aa).

2 consecutive transmembrane segments (helical) span residues 4–24 and 25–45; these read IIIPAILAIFALWILLQISLE and MSIVKNPMNYFIVFIIFFLFV.

It localises to the cell membrane. This is an uncharacterized protein from Bacillus subtilis (strain 168).